The chain runs to 218 residues: DNA endonuclease I-ChuI (218 aa).

Belongs to the LAGLIDADG endonuclease family.

Its subcellular location is the plastid. It is found in the chloroplast. Probable endonuclease involved in intron homing. Encoded in the group-I intron of the subunit rRNA-encoding gene (rrnL), it generates a staggered cut with 4-nt (CTCG) 3'-OH overhangs 2 bp downstream from the intron insertion site. This is DNA endonuclease I-ChuI from Chlamydomonas applanata (Chlamydomonas humicola).